Here is a 205-residue protein sequence, read N- to C-terminus: MKIANTFIKRGAAGGLDLSQAPGVTLTLAERRRSRQRLDLDEGRGELGMAIERGQTLRDGDVLVAEDGTYVVVRAALEDVARVTAATPWQLARAAYHLGNRHVLLEIAERHLQFEYDAVLIDMLAQLGGVTATRLRAVFEPDVGAYGGGHRHGHDESFGDDYALAQAAYHAHEAHPHAHFHAGGHGHVHSGHGHGGKHGEHDAES.

Positions 178 to 196 are enriched in basic residues; sequence AHFHAGGHGHVHSGHGHGG. The tract at residues 178 to 205 is disordered; it reads AHFHAGGHGHVHSGHGHGGKHGEHDAES.

Belongs to the UreE family.

Its subcellular location is the cytoplasm. Functionally, involved in urease metallocenter assembly. Binds nickel. Probably functions as a nickel donor during metallocenter assembly. This is Urease accessory protein UreE from Bordetella pertussis (strain Tohama I / ATCC BAA-589 / NCTC 13251).